The following is a 249-amino-acid chain: Eukaryotic translation initiation factor 3 subunit K (249 aa).

The region spanning 46–222 (FDCYANLALL…VKVPTNKENE (177 aa)) is the PCI domain.

This sequence belongs to the eIF-3 subunit K family. In terms of assembly, component of the eukaryotic translation initiation factor 3 (eIF-3) complex.

It localises to the cytoplasm. Component of the eukaryotic translation initiation factor 3 (eIF-3) complex, which is involved in protein synthesis of a specialized repertoire of mRNAs and, together with other initiation factors, stimulates binding of mRNA and methionyl-tRNAi to the 40S ribosome. The eIF-3 complex specifically targets and initiates translation of a subset of mRNAs involved in cell proliferation. In Aspergillus fumigatus (strain CBS 144.89 / FGSC A1163 / CEA10) (Neosartorya fumigata), this protein is Eukaryotic translation initiation factor 3 subunit K.